The sequence spans 250 residues: 3-deoxy-manno-octulosonate cytidylyltransferase (250 aa).

Belongs to the KdsB family.

The protein localises to the cytoplasm. The enzyme catalyses 3-deoxy-alpha-D-manno-oct-2-ulosonate + CTP = CMP-3-deoxy-beta-D-manno-octulosonate + diphosphate. Its pathway is nucleotide-sugar biosynthesis; CMP-3-deoxy-D-manno-octulosonate biosynthesis; CMP-3-deoxy-D-manno-octulosonate from 3-deoxy-D-manno-octulosonate and CTP: step 1/1. It functions in the pathway bacterial outer membrane biogenesis; lipopolysaccharide biosynthesis. Functionally, activates KDO (a required 8-carbon sugar) for incorporation into bacterial lipopolysaccharide in Gram-negative bacteria. The polypeptide is 3-deoxy-manno-octulosonate cytidylyltransferase (Francisella tularensis subsp. holarctica (strain LVS)).